Here is a 283-residue protein sequence, read N- to C-terminus: NAD kinase (283 aa).

The Proton acceptor role is filled by aspartate 73. NAD(+) is bound by residues 73-74 (DG), 146-147 (NE), histidine 157, histidine 176, aspartate 178, 189-194 (TAYNLS), and alanine 213.

Belongs to the NAD kinase family. A divalent metal cation is required as a cofactor.

The protein localises to the cytoplasm. The enzyme catalyses NAD(+) + ATP = ADP + NADP(+) + H(+). Its function is as follows. Involved in the regulation of the intracellular balance of NAD and NADP, and is a key enzyme in the biosynthesis of NADP. Catalyzes specifically the phosphorylation on 2'-hydroxyl of the adenosine moiety of NAD to yield NADP. The chain is NAD kinase from Haloarcula marismortui (strain ATCC 43049 / DSM 3752 / JCM 8966 / VKM B-1809) (Halobacterium marismortui).